Here is a 403-residue protein sequence, read N- to C-terminus: Cytoplasmic tRNA 2-thiolation protein 2 (403 aa).

The protein belongs to the CTU2/NCS2 family.

The protein localises to the cytoplasm. It functions in the pathway tRNA modification; 5-methoxycarbonylmethyl-2-thiouridine-tRNA biosynthesis. Its function is as follows. Plays a central role in 2-thiolation of mcm(5)S(2)U at tRNA wobble positions of tRNA(Lys), tRNA(Glu) and tRNA(Gln). May act by forming a heterodimer with NCS6/CTU1 that ligates sulfur from thiocarboxylated URM1 onto the uridine of tRNAs at wobble position. This is Cytoplasmic tRNA 2-thiolation protein 2 from Drosophila ananassae (Fruit fly).